The following is a 502-amino-acid chain: Probable cytosol aminopeptidase (502 aa).

Positions 269 and 274 each coordinate Mn(2+). Lys281 is a catalytic residue. Asp292, Asp351, and Glu353 together coordinate Mn(2+). Arg355 is a catalytic residue.

This sequence belongs to the peptidase M17 family. Requires Mn(2+) as cofactor.

The protein resides in the cytoplasm. It catalyses the reaction Release of an N-terminal amino acid, Xaa-|-Yaa-, in which Xaa is preferably Leu, but may be other amino acids including Pro although not Arg or Lys, and Yaa may be Pro. Amino acid amides and methyl esters are also readily hydrolyzed, but rates on arylamides are exceedingly low.. It carries out the reaction Release of an N-terminal amino acid, preferentially leucine, but not glutamic or aspartic acids.. Its function is as follows. Presumably involved in the processing and regular turnover of intracellular proteins. Catalyzes the removal of unsubstituted N-terminal amino acids from various peptides. The chain is Probable cytosol aminopeptidase from Shewanella loihica (strain ATCC BAA-1088 / PV-4).